The sequence spans 594 residues: MVLLHVLFEHAVGYALLALKEVEEISLLQPQVEESVLNLGKFHSIVRLVAFCPFASSQVALENANAVSEGVVHEDLRLLLETHLPSKKKKVLLGVGDPKIGAAIQEELGYNCQTGGVIAEILRGVRLHFHNLVKGLTDLSACKAQLGLGHSYSRAKVKFNVNRVDNMIIQSISLLDQLDKDINTFSMRVREWYGYHFPELVKIINDNATYCRLAQFIGNRRELNEDKLEKLEELTMDGAKAKAILDASRSSMGMDISAIDLINIESFSSRVVSLSEYRQSLHTYLRSKMSQVAPSLSALIGEAVGARLIAHAGSLTNLAKYPASTVQILGAEKALFRALKTRGNTPKYGLIFHSTFIGRAAAKNKGRISRYLANKCSIASRIDCFSEVPTSVFGEKLREQVEERLSFYETGEIPRKNLDVMKEAMVQAEEAAAEITRKLEKQEKKRLKKEKKRLAALALASSENSSSTPEECEEMSEKPKKKKKQKPQEVPQENGMEDPSISFSKPKKKKSFSKEELMSSDLEETAGSTSIPKRKKSTPKEETVNDPEEAGHRSGSKKKRKFSKEEPVSSGPEEAVGKSSSKKKKKFHKASQED.

Glycyl lysine isopeptide (Lys-Gly) (interchain with G-Cter in SUMO2) cross-links involve residues Lys87, Lys230, and Lys240. The 119-residue stretch at 292-410 (VAPSLSALIG…VEERLSFYET (119 aa)) folds into the Nop domain. The residue at position 314 (Ser314) is a Phosphoserine. The residue at position 359 (Arg359) is an Omega-N-methylarginine. Composition is skewed to low complexity over residues 458–469 (ALASSENSSSTP) and 488–504 (QEVP…ISFS). Residues 458-594 (ALASSENSSS…KKFHKASQED (137 aa)) form a disordered region. Residues Ser466 and Ser467 each carry the phosphoserine modification. Thr468 carries the phosphothreonine modification. Residues Ser511, Ser519, Ser520, and Ser537 each carry the phosphoserine modification. Lys540 participates in a covalent cross-link: Glycyl lysine isopeptide (Lys-Gly) (interchain with G-Cter in SUMO2). Lys561 carries the N6-acetyllysine modification. Ser563 carries the phosphoserine modification. A Glycyl lysine isopeptide (Lys-Gly) (interchain with G-Cter in SUMO2) cross-link involves residue Lys564. Phosphoserine occurs at positions 569, 570, 579, and 581. Positions 580–594 (SSKKKKKFHKASQED) are enriched in basic residues.

Belongs to the NOP5/NOP56 family. In terms of assembly, part of a large pre-ribosomal ribonucleoprotein (RNP) complex, that consists of at least 62 ribosomal proteins, 45 nonribosomal proteins and both pre-rRNA and mature rRNA species. Within this complex directly interacts with TCOF1 in an RNA-independent manner. Core component of box C/D small nucleolar ribonucleoprotein (snoRNP) particles; the core proteins SNU13, NOP56, NOP58 and FBL or FBLL1 assemble stepwise onto the snoRNA. Interacts with NOP1 and NOP58. Interacts with NUFIP1, RUVBL1 and RUVBL2; RUVBL1:RUVBL2 seem to bridge the association of NOP56 with NUFIP1. Part of the small subunit (SSU) processome, composed of more than 70 proteins and the RNA chaperone small nucleolar RNA (snoRNA) U3. Interacts with NOP2 and FBL.

Its subcellular location is the nucleus. The protein resides in the nucleolus. The protein localises to the cytoplasm. It localises to the nucleoplasm. Involved in the early to middle stages of 60S ribosomal subunit biogenesis. Required for the biogenesis of box C/D snoRNAs such U3, U8 and U14 snoRNAs. Part of the small subunit (SSU) processome, first precursor of the small eukaryotic ribosomal subunit. During the assembly of the SSU processome in the nucleolus, many ribosome biogenesis factors, an RNA chaperone and ribosomal proteins associate with the nascent pre-rRNA and work in concert to generate RNA folding, modifications, rearrangements and cleavage as well as targeted degradation of pre-ribosomal RNA by the RNA exosome. Core component of box C/D small nucleolar ribonucleoprotein (snoRNP) complexes that function in methylation of multiple sites on ribosomal RNAs (rRNAs) and messenger RNAs (mRNAs). This is Nucleolar protein 56 from Homo sapiens (Human).